Reading from the N-terminus, the 171-residue chain is Lipoprotein signal peptidase (171 aa).

4 helical membrane-spanning segments follow: residues 15 to 35 (WLWL…IVMD), 47 to 67 (VLPF…SFLS), 72 to 92 (WQRW…AYWM), and 107 to 127 (ALII…GFVV). Catalysis depends on residues Asp-128 and Asp-146. The helical transmembrane segment at 141–161 (AFNLADSTICIGAAMIILDGF) threads the bilayer.

This sequence belongs to the peptidase A8 family.

It is found in the cell inner membrane. It catalyses the reaction Release of signal peptides from bacterial membrane prolipoproteins. Hydrolyzes -Xaa-Yaa-Zaa-|-(S,diacylglyceryl)Cys-, in which Xaa is hydrophobic (preferably Leu), and Yaa (Ala or Ser) and Zaa (Gly or Ala) have small, neutral side chains.. It functions in the pathway protein modification; lipoprotein biosynthesis (signal peptide cleavage). Functionally, this protein specifically catalyzes the removal of signal peptides from prolipoproteins. The sequence is that of Lipoprotein signal peptidase from Vibrio cholerae serotype O1 (strain ATCC 39541 / Classical Ogawa 395 / O395).